We begin with the raw amino-acid sequence, 334 residues long: Malate dehydrogenase 2 (334 aa).

12–18 serves as a coordination point for NAD(+); that stretch reads GAAGRVA. Substrate-binding residues include Arg-93 and Arg-99. NAD(+)-binding positions include Asn-106, Gln-113, and 130–132; that span reads VGN. Substrate is bound by residues Asn-132 and Arg-166. His-191 functions as the Proton acceptor in the catalytic mechanism.

The protein belongs to the LDH/MDH superfamily. MDH type 2 family.

It catalyses the reaction (S)-malate + NAD(+) = oxaloacetate + NADH + H(+). Catalyzes the reversible oxidation of malate to oxaloacetate. The protein is Malate dehydrogenase 2 of Albidiferax ferrireducens (strain ATCC BAA-621 / DSM 15236 / T118) (Rhodoferax ferrireducens).